The chain runs to 410 residues: ACT domain-containing protein ACR10 (410 aa).

ACT domains lie at Val22–Gln105, Leu114–Pro197, and Leu245–Met324.

Functionally, may bind amino acids. This Arabidopsis thaliana (Mouse-ear cress) protein is ACT domain-containing protein ACR10.